A 366-amino-acid chain; its full sequence is Chorismate synthase (366 aa).

Positions 48 and 54 each coordinate NADP(+). Residues 125-127, 238-239, Gly278, 293-297, and Arg319 contribute to the FMN site; these read RSS, NA, and KPTSS.

The protein belongs to the chorismate synthase family. As to quaternary structure, homotetramer. Requires FMNH2 as cofactor.

It catalyses the reaction 5-O-(1-carboxyvinyl)-3-phosphoshikimate = chorismate + phosphate. It functions in the pathway metabolic intermediate biosynthesis; chorismate biosynthesis; chorismate from D-erythrose 4-phosphate and phosphoenolpyruvate: step 7/7. Functionally, catalyzes the anti-1,4-elimination of the C-3 phosphate and the C-6 proR hydrogen from 5-enolpyruvylshikimate-3-phosphate (EPSP) to yield chorismate, which is the branch point compound that serves as the starting substrate for the three terminal pathways of aromatic amino acid biosynthesis. This reaction introduces a second double bond into the aromatic ring system. The chain is Chorismate synthase from Neisseria gonorrhoeae (strain ATCC 700825 / FA 1090).